Reading from the N-terminus, the 636-residue chain is uncharacterized protein (636 aa).

This is an uncharacterized protein from Bacillus subtilis (strain 168).